The chain runs to 375 residues: Dual-specificity RNA methyltransferase RlmN (375 aa).

Glutamate 93 functions as the Proton acceptor in the catalytic mechanism. The Radical SAM core domain maps to 99 to 346 (ETNRGTLCVS…TTTRKTRGDD (248 aa)). An intrachain disulfide couples cysteine 106 to cysteine 351. [4Fe-4S] cluster is bound by residues cysteine 113, cysteine 117, and cysteine 120. Residues 177 to 178 (GE), serine 209, 231 to 233 (SLH), and asparagine 308 contribute to the S-adenosyl-L-methionine site. Cysteine 351 serves as the catalytic S-methylcysteine intermediate.

The protein belongs to the radical SAM superfamily. RlmN family. [4Fe-4S] cluster is required as a cofactor.

It is found in the cytoplasm. It carries out the reaction adenosine(2503) in 23S rRNA + 2 reduced [2Fe-2S]-[ferredoxin] + 2 S-adenosyl-L-methionine = 2-methyladenosine(2503) in 23S rRNA + 5'-deoxyadenosine + L-methionine + 2 oxidized [2Fe-2S]-[ferredoxin] + S-adenosyl-L-homocysteine. The catalysed reaction is adenosine(37) in tRNA + 2 reduced [2Fe-2S]-[ferredoxin] + 2 S-adenosyl-L-methionine = 2-methyladenosine(37) in tRNA + 5'-deoxyadenosine + L-methionine + 2 oxidized [2Fe-2S]-[ferredoxin] + S-adenosyl-L-homocysteine. Functionally, specifically methylates position 2 of adenine 2503 in 23S rRNA and position 2 of adenine 37 in tRNAs. m2A2503 modification seems to play a crucial role in the proofreading step occurring at the peptidyl transferase center and thus would serve to optimize ribosomal fidelity. This Azoarcus sp. (strain BH72) protein is Dual-specificity RNA methyltransferase RlmN.